The following is a 174-amino-acid chain: Large ribosomal subunit protein uL10 (174 aa).

This sequence belongs to the universal ribosomal protein uL10 family. As to quaternary structure, part of the ribosomal stalk of the 50S ribosomal subunit. The N-terminus interacts with L11 and the large rRNA to form the base of the stalk. The C-terminus forms an elongated spine to which L12 dimers bind in a sequential fashion forming a multimeric L10(L12)X complex.

Its function is as follows. Forms part of the ribosomal stalk, playing a central role in the interaction of the ribosome with GTP-bound translation factors. This is Large ribosomal subunit protein uL10 from Trichlorobacter lovleyi (strain ATCC BAA-1151 / DSM 17278 / SZ) (Geobacter lovleyi).